A 337-amino-acid polypeptide reads, in one-letter code: Monoacylglycerol lipase ABHD6 (337 aa).

The Extracellular segment spans residues 1–19 (MDLDVVNMFVIAGGTLALP). The helical; Signal-anchor for type II membrane protein transmembrane segment at 20–42 (ILAFVASFLLWPSALIRIYYWYW) threads the bilayer. Topologically, residues 43-337 (RRTLGMQVRY…HSTDNSKKLD (295 aa)) are cytoplasmic. Residues 72–313 (PSILMLHGFS…CGHSVVMERP (242 aa)) enclose the AB hydrolase-1 domain. Ser-148 serves as the catalytic Nucleophile. Active-site charge relay system residues include Asp-278 and His-306.

It belongs to the AB hydrolase superfamily.

It localises to the late endosome membrane. It is found in the lysosome membrane. The protein resides in the mitochondrion membrane. The enzyme catalyses Hydrolyzes glycerol monoesters of long-chain fatty acids.. It carries out the reaction 1-octanoylglycerol + H2O = octanoate + glycerol + H(+). It catalyses the reaction 1-decanoylglycerol + H2O = decanoate + glycerol + H(+). The catalysed reaction is 1-dodecanoylglycerol + H2O = dodecanoate + glycerol + H(+). The enzyme catalyses 1-tetradecanoylglycerol + H2O = tetradecanoate + glycerol + H(+). It carries out the reaction 2-hexadecanoylglycerol + H2O = glycerol + hexadecanoate + H(+). It catalyses the reaction 2-(9Z-octadecenoyl)-glycerol + H2O = glycerol + (9Z)-octadecenoate + H(+). The catalysed reaction is 1-(9Z-octadecenoyl)-glycerol + H2O = glycerol + (9Z)-octadecenoate + H(+). The enzyme catalyses 2-(9Z,12Z-octadecadienoyl)-glycerol + H2O = (9Z,12Z)-octadecadienoate + glycerol + H(+). It carries out the reaction 2-(5Z,8Z,11Z,14Z-eicosatetraenoyl)-glycerol + H2O = glycerol + (5Z,8Z,11Z,14Z)-eicosatetraenoate + H(+). It catalyses the reaction 1-(5Z,8Z,11Z,14Z-eicosatetraenoyl)-glycerol + H2O = glycerol + (5Z,8Z,11Z,14Z)-eicosatetraenoate + H(+). The catalysed reaction is 1-(9Z,12Z-octadecadienoyl)-glycerol + H2O = (9Z,12Z)-octadecadienoate + glycerol + H(+). The enzyme catalyses 3-(9Z-octadecenoyl)-sn-glycero-1-phospho-(3'-(9Z-octadecenoyl)-1'-sn-glycerol) + H2O = 3-(9Z-octadecenoyl)-sn-glycero-1-phospho-(1'-sn-glycerol) + (9Z)-octadecenoate + H(+). It carries out the reaction (S,S)-2-(9Z-octadecenoyl)-sn-glycero-1-phospho-(2'-(9Z-octadecenoyl)-1'-sn-glycerol) + H2O = (S,S)-2-(9Z-octadecenoyl)-sn-glycero-1-phospho-(1'-sn-glycerol) + (9Z)-octadecenoate + H(+). It catalyses the reaction (R,R)-2-(9Z-octadecenoyl)-sn-glycero-3-phospho-(2'-(9Z-octadecenoyl)-3'-sn-glycerol) + H2O = (R,R)-2-(9Z-octadecenoyl)-sn-glycero-3-phospho-(3'-sn-glycerol) + (9Z)-octadecenoate + H(+). Lipase that preferentially hydrolysis medium-chain saturated monoacylglycerols including 2-arachidonoylglycerol. Through 2-arachidonoylglycerol degradation may regulate endocannabinoid signaling pathways. Also has a lysophosphatidyl lipase activity with a preference for lysophosphatidylglycerol among other lysophospholipids. Also able to degrade bis(monoacylglycero)phosphate (BMP) and constitutes the major enzyme for BMP catabolism. BMP, also known as lysobisphosphatidic acid, is enriched in late endosomes and lysosomes and plays a key role in the formation of intraluminal vesicles and in lipid sorting. The polypeptide is Monoacylglycerol lipase ABHD6 (Bos taurus (Bovine)).